Reading from the N-terminus, the 204-residue chain is Holliday junction branch migration complex subunit RuvA (204 aa).

Residues 1–64 (MIARLRGTLL…EDGQTLFGFR (64 aa)) form a domain I region. A domain II region spans residues 65-143 (TRAERDLFRR…GVGGGSTAAP (79 aa)). Residues 144–153 (AAGADHPTGE) are flexible linker. The tract at residues 153 to 204 (ENDPVSEAIEGLVALGYKPPEAARMARNAAEPELGCEAIIRRALQRAVPRGG) is domain III.

Belongs to the RuvA family. In terms of assembly, homotetramer. Forms an RuvA(8)-RuvB(12)-Holliday junction (HJ) complex. HJ DNA is sandwiched between 2 RuvA tetramers; dsDNA enters through RuvA and exits via RuvB. An RuvB hexamer assembles on each DNA strand where it exits the tetramer. Each RuvB hexamer is contacted by two RuvA subunits (via domain III) on 2 adjacent RuvB subunits; this complex drives branch migration. In the full resolvosome a probable DNA-RuvA(4)-RuvB(12)-RuvC(2) complex forms which resolves the HJ.

The protein resides in the cytoplasm. Functionally, the RuvA-RuvB-RuvC complex processes Holliday junction (HJ) DNA during genetic recombination and DNA repair, while the RuvA-RuvB complex plays an important role in the rescue of blocked DNA replication forks via replication fork reversal (RFR). RuvA specifically binds to HJ cruciform DNA, conferring on it an open structure. The RuvB hexamer acts as an ATP-dependent pump, pulling dsDNA into and through the RuvAB complex. HJ branch migration allows RuvC to scan DNA until it finds its consensus sequence, where it cleaves and resolves the cruciform DNA. The protein is Holliday junction branch migration complex subunit RuvA of Halorhodospira halophila (strain DSM 244 / SL1) (Ectothiorhodospira halophila (strain DSM 244 / SL1)).